The sequence spans 718 residues: Methionine--tRNA ligase (718 aa).

A 'HIGH' region motif is present at residues 27 to 37 (PYANGQIHIGH). Positions 158, 161, 171, and 174 each coordinate Zn(2+). Residues 348-352 (KMSKS) carry the 'KMSKS' region motif. An ATP-binding site is contributed by Lys351. The tRNA-binding domain occupies 612–718 (DFAKIDLRIA…SGAKPGMRVK (107 aa)).

This sequence belongs to the class-I aminoacyl-tRNA synthetase family. MetG type 1 subfamily. As to quaternary structure, homodimer. Zn(2+) serves as cofactor.

Its subcellular location is the cytoplasm. It carries out the reaction tRNA(Met) + L-methionine + ATP = L-methionyl-tRNA(Met) + AMP + diphosphate. Is required not only for elongation of protein synthesis but also for the initiation of all mRNA translation through initiator tRNA(fMet) aminoacylation. The polypeptide is Methionine--tRNA ligase (Burkholderia cenocepacia (strain ATCC BAA-245 / DSM 16553 / LMG 16656 / NCTC 13227 / J2315 / CF5610) (Burkholderia cepacia (strain J2315))).